A 460-amino-acid chain; its full sequence is Nitrilase and fragile histidine triad fusion protein NitFhit (460 aa).

The 247-residue stretch at 33 to 279 folds into the CN hydrolase domain; sequence ATIAVGQMRS…LDIGTAEVDL (247 aa). Active-site residues include glutamate 72, lysine 142, and cysteine 183. In terms of domain architecture, HIT spans 315–422; that stretch reads DRPFATNIVD…MPRRLGDFGH (108 aa). Positions 407–411 match the Histidine triad motif motif; sequence HVHFH. Histidine 409 serves as the catalytic Tele-AMP-histidine intermediate.

This sequence in the N-terminal section; belongs to the UPF0012 family. Homotetramer. Mn(2+) is required as a cofactor.

It catalyses the reaction P(1),P(3)-bis(5'-adenosyl) triphosphate + H2O = AMP + ADP + 2 H(+). Its function is as follows. Cleaves A-5'-PPP-5'A to yield AMP and ADP. This chain is Nitrilase and fragile histidine triad fusion protein NitFhit, found in Drosophila melanogaster (Fruit fly).